Consider the following 387-residue polypeptide: Phosphoglycerate kinase (387 aa).

Substrate contacts are provided by residues 21 to 23 (DLN), R36, 59 to 62 (HLGR), R113, and R146. ATP-binding positions include K197, E314, and 340–343 (GGDT).

This sequence belongs to the phosphoglycerate kinase family. In terms of assembly, monomer.

It is found in the cytoplasm. The catalysed reaction is (2R)-3-phosphoglycerate + ATP = (2R)-3-phospho-glyceroyl phosphate + ADP. The protein operates within carbohydrate degradation; glycolysis; pyruvate from D-glyceraldehyde 3-phosphate: step 2/5. This is Phosphoglycerate kinase from Klebsiella pneumoniae (strain 342).